We begin with the raw amino-acid sequence, 667 residues long: Probable sulfate permease C320.05 (667 aa).

The tract at residues 1-27 (MSSPSENHLLGPKTSFIDNRTSTSRPL) is disordered. Residues 16-25 (FIDNRTSTSR) are compositionally biased toward polar residues. Transmembrane regions (helical) follow at residues 77–97 (IIWD…IALS), 102–122 (FLGV…ILYC), 162–182 (ILVT…AGLF), 198–218 (GCIL…FFGF), 240–260 (MSKA…LLIG), 275–295 (IVSI…SKKF), 301–321 (YGIA…LPLP), 336–356 (GVMC…AISL), 368–388 (LISL…PICG), 405–425 (VATI…MPVF), 433–453 (LASM…VEIF), and 465–485 (GIIF…GIIF). An STAS domain is found at 532–657 (SSTAVESAPR…DHVQDSIKKV (126 aa)).

The protein belongs to the SLC26A/SulP transporter (TC 2.A.53) family.

It is found in the endoplasmic reticulum membrane. Possible sulfate transporter. The chain is Probable sulfate permease C320.05 from Schizosaccharomyces pombe (strain 972 / ATCC 24843) (Fission yeast).